A 103-amino-acid chain; its full sequence is Integration host factor subunit beta (103 aa).

This sequence belongs to the bacterial histone-like protein family. As to quaternary structure, heterodimer of an alpha and a beta chain.

Its function is as follows. This protein is one of the two subunits of integration host factor, a specific DNA-binding protein that functions in genetic recombination as well as in transcriptional and translational control. The sequence is that of Integration host factor subunit beta from Rhizobium meliloti (strain 1021) (Ensifer meliloti).